A 121-amino-acid chain; its full sequence is Small ribosomal subunit protein uS13 (121 aa).

The disordered stretch occupies residues 93-121 (RGLPVRGQNTKNNARTRKGKATAIAGKKK). Over residues 106–121 (ARTRKGKATAIAGKKK) the composition is skewed to basic residues.

Belongs to the universal ribosomal protein uS13 family. As to quaternary structure, part of the 30S ribosomal subunit. Forms a loose heterodimer with protein S19. Forms two bridges to the 50S subunit in the 70S ribosome.

Its function is as follows. Located at the top of the head of the 30S subunit, it contacts several helices of the 16S rRNA. In the 70S ribosome it contacts the 23S rRNA (bridge B1a) and protein L5 of the 50S subunit (bridge B1b), connecting the 2 subunits; these bridges are implicated in subunit movement. Contacts the tRNAs in the A and P-sites. The protein is Small ribosomal subunit protein uS13 of Streptococcus uberis (strain ATCC BAA-854 / 0140J).